The following is a 473-amino-acid chain: ATP synthase subunit beta (473 aa).

153–160 (GGAGVGKT) is a binding site for ATP.

This sequence belongs to the ATPase alpha/beta chains family. In terms of assembly, F-type ATPases have 2 components, CF(1) - the catalytic core - and CF(0) - the membrane proton channel. CF(1) has five subunits: alpha(3), beta(3), gamma(1), delta(1), epsilon(1). CF(0) has three main subunits: a(1), b(2) and c(9-12). The alpha and beta chains form an alternating ring which encloses part of the gamma chain. CF(1) is attached to CF(0) by a central stalk formed by the gamma and epsilon chains, while a peripheral stalk is formed by the delta and b chains.

The protein localises to the cell inner membrane. It carries out the reaction ATP + H2O + 4 H(+)(in) = ADP + phosphate + 5 H(+)(out). Functionally, produces ATP from ADP in the presence of a proton gradient across the membrane. The catalytic sites are hosted primarily by the beta subunits. This chain is ATP synthase subunit beta, found in Rickettsia massiliae (strain Mtu5).